The sequence spans 704 residues: DNA-directed DNA polymerase (704 aa).

The interval 1–187 (MIVSDIEANA…TKALLEKLLS (187 aa)) is 3'-5'exonuclease. Mg(2+) is bound by residues Asp5, Glu7, and Asp174. The tract at residues 202–704 (GYTTFWSESL…KMGPNWAICH (503 aa)) is polymerase. The tract at residues 262-338 (GSWYQPKGGT…VEHVVFNPSS (77 aa)) is binding to host TrxA. Positions 475 and 476 each coordinate Mg(2+). Substrate contacts are provided by His506, Arg518, Lys522, and Tyr526. Mg(2+) is bound at residue Asp654.

The protein belongs to the DNA polymerase type-A family. In terms of assembly, composed of two subunits. One is encoded by the phage and the other is encoded by the host thioredoxin. Interacts with DNA primase/helicase; this interaction is essential for the coordination of DNA unwinding and nucleotide polymerization on duplex DNA. Interacts with the ssDNA-binding protein. Part of the replicase complex that includes the DNA polymerase, thioredoxin, the primase/helicase and the single-stranded DNA binding protein. Mg(2+) serves as cofactor.

The catalysed reaction is DNA(n) + a 2'-deoxyribonucleoside 5'-triphosphate = DNA(n+1) + diphosphate. In terms of biological role, replicates viral genomic DNA. This polymerase possesses two enzymatic activities: DNA synthesis (polymerase) and an exonucleolytic activity that degrades single-stranded DNA in the 3'-5' direction. Non-processive DNA polymerase that achieves processivity by binding to host thioredoxin (TrxA). This interaction increases the rate of dNTP incorporation to yield a processivity of approximately 800 nucleotides (nt) per binding event. Interacts with DNA helicase gp4 to coordinate nucleotide polymerization with unwinding of the DNA. The leading strand is synthesized continuously while synthesis of the lagging strand requires the synthesis of oligoribonucleotides by the primase domain of gp4. In Escherichia phage T7 (Bacteriophage T7), this protein is DNA-directed DNA polymerase.